Reading from the N-terminus, the 391-residue chain is Aminoacetone oxidase (391 aa).

6 residues coordinate FAD: Ala-14, Glu-33, Ile-134, Glu-362, Asn-374, and Ile-375.

The protein belongs to the BaiN/RdsA family. As to quaternary structure, monomer. The cofactor is FAD.

Functionally, flavoprotein that probably catalyzes the condensation of two molecules of aminoacetone to yield 3,6-dimethyl-2,5-dihydropyrazine, which is subsequently oxidized to 2,5-dimethylpyrazine. It could be involved in a microbial defense mechanism related to aminoacetone catabolism through a pathway yielding dimethylpyrazine derivatives instead of methylglyoxal. It has also low aminoacetone oxidase activity, and can produce hydrogen peroxide from aminoacetone. In addition, it shows very low L-amino acid oxidase activity, and can produce hydrogen peroxide from peptone and from seven amino acids, L-aspartate, L-tryptophan, L-lysine, L-isoleucine, L-arginine, L-asparagine and L-glutamine. It cannot use L-malate, oxaloacetate or alpha-aminobutyrate. Plays a role in antioxidant defense. In Streptococcus cristatus, this protein is Aminoacetone oxidase.